A 340-amino-acid chain; its full sequence is Deubiquitinase SseL (340 aa).

The active site involves His-223. Residue Cys-285 is the Nucleophile of the active site.

This sequence belongs to the peptidase C79 family.

It localises to the secreted. The protein localises to the host cytoplasm. Functionally, effector proteins function to alter host cell physiology and promote bacterial survival in host tissues. This protease targets the host cell ubiquitin pathway by acting as a deubiquitinase in infected host cells. In Salmonella choleraesuis (strain SC-B67), this protein is Deubiquitinase SseL (sseL).